Consider the following 287-residue polypeptide: uncharacterized protein (287 aa).

Residues 115–287 enclose the ATP-grasp domain; it reads SLLSKETIKS…KKFLKKKLIS (173 aa).

This is an uncharacterized protein from Mycoplasma genitalium (strain ATCC 33530 / DSM 19775 / NCTC 10195 / G37) (Mycoplasmoides genitalium).